The sequence spans 431 residues: Adenylosuccinate synthetase (431 aa).

Residues 12-18 and 40-42 contribute to the GTP site; these read GDEGKGK and GHT. Aspartate 13 serves as the catalytic Proton acceptor. 2 residues coordinate Mg(2+): aspartate 13 and glycine 40. IMP-binding positions include 13 to 16, 38 to 41, threonine 131, arginine 145, glutamine 225, threonine 240, and arginine 304; these read DEGK and NAGH. The active-site Proton donor is histidine 41. Residue 300–306 coordinates substrate; the sequence is VNTGRPR. GTP contacts are provided by residues arginine 306, 332–334, and 414–416; these read KLD and STS.

Belongs to the adenylosuccinate synthetase family. As to quaternary structure, homodimer. It depends on Mg(2+) as a cofactor.

It localises to the cytoplasm. It carries out the reaction IMP + L-aspartate + GTP = N(6)-(1,2-dicarboxyethyl)-AMP + GDP + phosphate + 2 H(+). It functions in the pathway purine metabolism; AMP biosynthesis via de novo pathway; AMP from IMP: step 1/2. Plays an important role in the de novo pathway of purine nucleotide biosynthesis. Catalyzes the first committed step in the biosynthesis of AMP from IMP. The protein is Adenylosuccinate synthetase of Rhizobium rhizogenes (strain K84 / ATCC BAA-868) (Agrobacterium radiobacter).